The primary structure comprises 427 residues: Serine--tRNA ligase (427 aa).

Residue threonine 231–glutamate 233 coordinates L-serine. Residues arginine 262–glutamate 264 and valine 278 each bind ATP. Glutamate 285 is a binding site for L-serine. An ATP-binding site is contributed by glutamate 349 to serine 352. Position 384 (serine 384) interacts with L-serine.

The protein belongs to the class-II aminoacyl-tRNA synthetase family. Type-1 seryl-tRNA synthetase subfamily. As to quaternary structure, homodimer. The tRNA molecule binds across the dimer.

Its subcellular location is the cytoplasm. It carries out the reaction tRNA(Ser) + L-serine + ATP = L-seryl-tRNA(Ser) + AMP + diphosphate + H(+). It catalyses the reaction tRNA(Sec) + L-serine + ATP = L-seryl-tRNA(Sec) + AMP + diphosphate + H(+). Its pathway is aminoacyl-tRNA biosynthesis; selenocysteinyl-tRNA(Sec) biosynthesis; L-seryl-tRNA(Sec) from L-serine and tRNA(Sec): step 1/1. Catalyzes the attachment of serine to tRNA(Ser). Is also able to aminoacylate tRNA(Sec) with serine, to form the misacylated tRNA L-seryl-tRNA(Sec), which will be further converted into selenocysteinyl-tRNA(Sec). This chain is Serine--tRNA ligase, found in Chlamydia pneumoniae (Chlamydophila pneumoniae).